A 288-amino-acid chain; its full sequence is NAD kinase (288 aa).

The active-site Proton acceptor is D73. NAD(+) contacts are provided by residues 73 to 74, R78, 144 to 145, D174, 185 to 190, and A209; these read DG, NE, and TAYSLS.

The protein belongs to the NAD kinase family. A divalent metal cation serves as cofactor.

Its subcellular location is the cytoplasm. The enzyme catalyses NAD(+) + ATP = ADP + NADP(+) + H(+). Involved in the regulation of the intracellular balance of NAD and NADP, and is a key enzyme in the biosynthesis of NADP. Catalyzes specifically the phosphorylation on 2'-hydroxyl of the adenosine moiety of NAD to yield NADP. The chain is NAD kinase from Porphyromonas gingivalis (strain ATCC BAA-308 / W83).